Reading from the N-terminus, the 489-residue chain is Cytochrome P450 2C70 (489 aa).

The first 27 residues, 1–27 (MALFIFLGIWLSCFLFLFLWNQHRGRG), serve as a signal peptide directing secretion. Cys434 provides a ligand contact to heme.

This sequence belongs to the cytochrome P450 family. Heme serves as cofactor. In terms of tissue distribution, expressed in liver.

It is found in the endoplasmic reticulum membrane. The protein localises to the microsome membrane. It catalyses the reaction chenodeoxycholate + reduced [NADPH--hemoprotein reductase] + O2 = alpha-muricholate + oxidized [NADPH--hemoprotein reductase] + H2O + H(+). It carries out the reaction ursodeoxycholate + reduced [NADPH--hemoprotein reductase] + O2 = beta-muricholate + oxidized [NADPH--hemoprotein reductase] + H2O + H(+). A cytochrome P450 monooxygenase involved in muricholic acid (MCA) synthesis. Hydroxylates at the 6-beta position two major bile acids, chenodeoxycholic acid (CDCA) and ursodeoxycholic acid (UDCA) to form alpha-MCA and beta-MCA, respectively. May regulate NR1H4/farnesoid X receptor signaling, as taurine-conjugated MCAs are antagonists of NR1H4. Mechanistically, uses molecular oxygen inserting one oxygen atom into a substrate, and reducing the second into a water molecule, with two electrons provided by NADPH via cytochrome P450 reductase (CPR; NADPH-ferrihemoprotein reductase). This chain is Cytochrome P450 2C70, found in Mus musculus (Mouse).